The primary structure comprises 469 residues: ATP synthase subunit beta (469 aa).

Position 156-163 (156-163) interacts with ATP; sequence GGAGVGKT.

Belongs to the ATPase alpha/beta chains family. As to quaternary structure, F-type ATPases have 2 components, CF(1) - the catalytic core - and CF(0) - the membrane proton channel. CF(1) has five subunits: alpha(3), beta(3), gamma(1), delta(1), epsilon(1). CF(0) has three main subunits: a(1), b(2) and c(9-12). The alpha and beta chains form an alternating ring which encloses part of the gamma chain. CF(1) is attached to CF(0) by a central stalk formed by the gamma and epsilon chains, while a peripheral stalk is formed by the delta and b chains.

The protein localises to the cell membrane. The catalysed reaction is ATP + H2O + 4 H(+)(in) = ADP + phosphate + 5 H(+)(out). Produces ATP from ADP in the presence of a proton gradient across the membrane. The catalytic sites are hosted primarily by the beta subunits. The protein is ATP synthase subunit beta of Bacillus anthracis (strain CDC 684 / NRRL 3495).